An 854-amino-acid chain; its full sequence is DNA mismatch repair protein MutS (854 aa).

Residue 608 to 615 coordinates ATP; sequence GPNMAGKS.

Belongs to the DNA mismatch repair MutS family.

Functionally, this protein is involved in the repair of mismatches in DNA. It is possible that it carries out the mismatch recognition step. This protein has a weak ATPase activity. In Leuconostoc mesenteroides subsp. mesenteroides (strain ATCC 8293 / DSM 20343 / BCRC 11652 / CCM 1803 / JCM 6124 / NCDO 523 / NBRC 100496 / NCIMB 8023 / NCTC 12954 / NRRL B-1118 / 37Y), this protein is DNA mismatch repair protein MutS.